An 89-amino-acid polypeptide reads, in one-letter code: Small ribosomal subunit protein uS17 (89 aa).

It belongs to the universal ribosomal protein uS17 family. As to quaternary structure, part of the 30S ribosomal subunit.

In terms of biological role, one of the primary rRNA binding proteins, it binds specifically to the 5'-end of 16S ribosomal RNA. The polypeptide is Small ribosomal subunit protein uS17 (Novosphingobium aromaticivorans (strain ATCC 700278 / DSM 12444 / CCUG 56034 / CIP 105152 / NBRC 16084 / F199)).